A 121-amino-acid chain; its full sequence is MLVIFLGILGLLANQVSSQLVGQLHSTENPSENELEYWCTYMECCQFCWDCQNGLCVHKLGNTTILENEYVHPCIVSRWLNKCMYDLGQGIDHVMVCSQPKHWNPYKILKKEWKENNSQNI.

A signal peptide spans 1–20 (MLVIFLGILGLLANQVSSQL). N-linked (GlcNAc...) asparagine; by host glycosylation is found at asparagine 62 and asparagine 116.

This sequence belongs to the asfivirus MGF 110 family.

This African swine fever virus (isolate Portugal/Lis 57/1957) (ASFV) protein is Protein MGF 110-5L.